The primary structure comprises 450 residues: Zinc finger protein 446 (450 aa).

The SCAN box domain occupies 26 to 108 (RLRFRGFCYQ…ALVEGLQHDP (83 aa)). K130 participates in a covalent cross-link: Glycyl lysine isopeptide (Lys-Gly) (interchain with G-Cter in SUMO2). 2 disordered regions span residues 130-155 (KTEEPLGSPHPSGTVESPGEGPQDTR) and 168-205 (EEPNVDGQEVAPSSPPLAAQSPEGNHGHQEPASTSFHP). S137 is modified (phosphoserine). The KRAB domain maps to 208 to 254 (IQEEWGLLDRSQKELYWDAMLEKYGTVVSLGLPPHQPEAQAQSELGM). A Phosphoserine modification is found at S218. Disordered stretches follow at residues 263–331 (RSLR…PRKP) and 354–389 (HTSGPGVQSPGLATGESTEKPPQGEVAFPHHPRRSL). Residues 275-286 (PGCPEAQPPQGP) are compositionally biased toward pro residues. The span at 287–306 (GPAAWEGLSGAATPAPTVRP) shows a compositional bias: low complexity. T308 carries the phosphothreonine modification. A Glycyl lysine isopeptide (Lys-Gly) (interchain with G-Cter in SUMO2) cross-link involves residue K330. 3 C2H2-type zinc fingers span residues 332 to 359 (YTCEQCGRGFDWKSVFVIHHRTHTSGPG), 395 to 422 (YPCEECGCSFSWKSQLVIHRKSHTGQRR), and 423 to 450 (HFCSDCGRAFDWKSQLVIHRKGHRPEVP).

Belongs to the krueppel C2H2-type zinc-finger protein family.

It is found in the nucleus. In terms of biological role, may be involved in transcriptional regulation. This chain is Zinc finger protein 446 (ZNF446), found in Homo sapiens (Human).